Reading from the N-terminus, the 358-residue chain is Photosystem II protein D1 2 (358 aa).

Transmembrane regions (helical) follow at residues 28–45 (YVGW…AATI), 117–132 (HFLI…QWEL), and 141–155 (WICV…AAMA). His-117 provides a ligand contact to chlorophyll a. Tyr-125 provides a ligand contact to pheophytin a. [CaMn4O5] cluster contacts are provided by Asp-169 and Glu-188. Residues 196–217 (FHMLGVAGVFGGSLFSAMHGSL) form a helical membrane-spanning segment. Chlorophyll a is bound at residue His-197. A quinone-binding positions include His-214 and 263 to 264 (SF). His-214 is a Fe cation binding site. Position 271 (His-271) interacts with Fe cation. A helical membrane pass occupies residues 273–287 (FLGAWPVVGIWFTSM). [CaMn4O5] cluster-binding residues include His-331, Glu-332, Asp-341, and Ala-343. Residues 344–358 (AAESTPVALQAPAIG) constitute a propeptide that is removed on maturation.

The protein belongs to the reaction center PufL/M/PsbA/D family. In terms of assembly, PSII is composed of 1 copy each of membrane proteins PsbA, PsbB, PsbC, PsbD, PsbE, PsbF, PsbH, PsbI, PsbJ, PsbK, PsbL, PsbM, PsbT, PsbX, PsbY, PsbZ, Psb30/Ycf12, peripheral proteins PsbO, CyanoQ (PsbQ), PsbU, PsbV and a large number of cofactors. It forms dimeric complexes. The cofactor is The D1/D2 heterodimer binds P680, chlorophylls that are the primary electron donor of PSII, and subsequent electron acceptors. It shares a non-heme iron and each subunit binds pheophytin, quinone, additional chlorophylls, carotenoids and lipids. D1 provides most of the ligands for the Mn4-Ca-O5 cluster of the oxygen-evolving complex (OEC). There is also a Cl(-1) ion associated with D1 and D2, which is required for oxygen evolution. The PSII complex binds additional chlorophylls, carotenoids and specific lipids.. Post-translationally, tyr-160 forms a radical intermediate that is referred to as redox-active TyrZ, YZ or Y-Z. C-terminally processed by CtpA; processing is essential to allow assembly of the oxygen-evolving complex and thus photosynthetic growth.

It is found in the cellular thylakoid membrane. It catalyses the reaction 2 a plastoquinone + 4 hnu + 2 H2O = 2 a plastoquinol + O2. In terms of biological role, photosystem II (PSII) is a light-driven water:plastoquinone oxidoreductase that uses light energy to abstract electrons from H(2)O, generating O(2) and a proton gradient subsequently used for ATP formation. It consists of a core antenna complex that captures photons, and an electron transfer chain that converts photonic excitation into a charge separation. The D1/D2 (PsbA/PsbD) reaction center heterodimer binds P680, the primary electron donor of PSII as well as several subsequent electron acceptors. The protein is Photosystem II protein D1 2 of Synechococcus sp. (strain CC9605).